A 419-amino-acid polypeptide reads, in one-letter code: UDP-N-acetylglucosamine 1-carboxyvinyltransferase (419 aa).

Residue 22–23 (KN) participates in phosphoenolpyruvate binding. Arg-95 contacts UDP-N-acetyl-alpha-D-glucosamine. Residue Cys-119 is the Proton donor of the active site. At Cys-119 the chain carries 2-(S-cysteinyl)pyruvic acid O-phosphothioketal. UDP-N-acetyl-alpha-D-glucosamine is bound by residues 164-167 (KVSV), Asp-308, and Ile-330.

The protein belongs to the EPSP synthase family. MurA subfamily.

The protein resides in the cytoplasm. It catalyses the reaction phosphoenolpyruvate + UDP-N-acetyl-alpha-D-glucosamine = UDP-N-acetyl-3-O-(1-carboxyvinyl)-alpha-D-glucosamine + phosphate. It functions in the pathway cell wall biogenesis; peptidoglycan biosynthesis. Functionally, cell wall formation. Adds enolpyruvyl to UDP-N-acetylglucosamine. The sequence is that of UDP-N-acetylglucosamine 1-carboxyvinyltransferase from Rickettsia rickettsii (strain Iowa).